Here is a 343-residue protein sequence, read N- to C-terminus: UPF0157 protein YqkA (343 aa).

Positions 8 to 144 constitute an N-acetyltransferase domain; it reads KEATIAREIL…VKAAQGLLLS (137 aa). The segment at 135–343 is UPF0157; that stretch reads VKAAQGLLLS…ENDENGGFTL (209 aa).

In the C-terminal section; belongs to the UPF0157 (GrpB) family.

This chain is UPF0157 protein YqkA (yqkA), found in Bacillus subtilis (strain 168).